The chain runs to 498 residues: Dynein regulatory complex subunit 2 (498 aa).

Coiled coils occupy residues 98–160 (VIKS…RKTI), 250–311 (KDEK…KAQR), and 417–441 (SLRH…QYLD).

Belongs to the DRC2 family. Component of the nexin-dynein regulatory complex (N-DRC). Interacts with DRC1.

It is found in the cytoplasm. It localises to the cytoskeleton. The protein resides in the flagellum basal body. Its subcellular location is the cell projection. The protein localises to the cilium. It is found in the flagellum. It localises to the flagellum axoneme. Component of the nexin-dynein regulatory complex (N-DRC), a key regulator of ciliary/flagellar motility which maintains the alignment and integrity of the distal axoneme and regulates microtubule sliding in motile axonemes. Plays a critical role in the assembly of N-DRC and also stabilizes the assembly of multiple inner dynein arms and radial spokes. Coassembles with DRC1 to form a central scaffold needed for assembly of the N-DRC and its attachment to the outer doublet microtubules. In Bos taurus (Bovine), this protein is Dynein regulatory complex subunit 2 (CCDC65).